A 342-amino-acid chain; its full sequence is L-lysine 2,3-aminomutase (342 aa).

Residues 106 to 329 (HKYQNRALLL…PRLAREIGGE (224 aa)) enclose the Radical SAM core domain. 3 residues coordinate [4Fe-4S] cluster: cysteine 120, cysteine 124, and cysteine 127. Lysine 332 carries the N6-(pyridoxal phosphate)lysine modification.

It belongs to the radical SAM superfamily. KamA family. [4Fe-4S] cluster serves as cofactor. Pyridoxal 5'-phosphate is required as a cofactor.

It catalyses the reaction L-lysine = D-beta-lysine. With EpmA is involved in the beta-lysylation step of the post-translational modification of translation elongation factor P (EF-P) on 'Lys-34'. EpmB appears to act before EpmA. Displays lysine 2,3-aminomutase activity, producing (R)-beta-lysine from (S)-alpha-lysine (L-lysine). The protein is L-lysine 2,3-aminomutase (epmB) of Salmonella typhimurium (strain LT2 / SGSC1412 / ATCC 700720).